The sequence spans 445 residues: Argininosuccinate synthase (445 aa).

Residues 17–25 (AFSGGLDTS) and A43 each bind ATP. Y99 is a binding site for L-citrulline. G129 and T131 together coordinate ATP. L-aspartate-binding residues include T131, N135, and D136. L-citrulline is bound at residue N135. Residue D136 participates in ATP binding. Residues R139 and S192 each contribute to the L-citrulline site. Position 194 (D194) interacts with ATP. The L-citrulline site is built by T201, E203, and E280.

The protein belongs to the argininosuccinate synthase family. Type 2 subfamily. In terms of assembly, homotetramer.

It is found in the cytoplasm. The catalysed reaction is L-citrulline + L-aspartate + ATP = 2-(N(omega)-L-arginino)succinate + AMP + diphosphate + H(+). It functions in the pathway amino-acid biosynthesis; L-arginine biosynthesis; L-arginine from L-ornithine and carbamoyl phosphate: step 2/3. This is Argininosuccinate synthase from Burkholderia cenocepacia (strain ATCC BAA-245 / DSM 16553 / LMG 16656 / NCTC 13227 / J2315 / CF5610) (Burkholderia cepacia (strain J2315)).